The primary structure comprises 382 residues: Mannitol-1-phosphate 5-dehydrogenase (382 aa).

Position 3–14 (3–14) interacts with NAD(+); the sequence is ALHFGAGNIGRG.

It belongs to the mannitol dehydrogenase family.

The enzyme catalyses D-mannitol 1-phosphate + NAD(+) = beta-D-fructose 6-phosphate + NADH + H(+). The protein is Mannitol-1-phosphate 5-dehydrogenase of Salmonella paratyphi A (strain ATCC 9150 / SARB42).